The primary structure comprises 889 residues: DNA mismatch repair protein MutS (889 aa).

Residues 1–17 (MPKTNSSAASTNANPSS) show a composition bias toward low complexity. Residues 1 to 20 (MPKTNSSAASTNANPSSLQQ) form a disordered region. Residue 640–647 (GPNMGGKS) coordinates ATP.

This sequence belongs to the DNA mismatch repair MutS family.

Its function is as follows. This protein is involved in the repair of mismatches in DNA. It is possible that it carries out the mismatch recognition step. This protein has a weak ATPase activity. This Pseudoalteromonas atlantica (strain T6c / ATCC BAA-1087) protein is DNA mismatch repair protein MutS.